A 113-amino-acid polypeptide reads, in one-letter code: Protein S100-A9 (113 aa).

N-acetylalanine is present on Ala-2. 2 EF-hand domains span residues 13 to 48 (ISTIINVFHQYSRKYGHPDTLNKAEFKEMVNKDLPN) and 55 to 90 (RNENLLRDIMEDLDTNQDNQLSFEECMMLMGKLIFA). Residue His-21 coordinates Zn(2+). Residues Ser-24 and His-29 each coordinate Ca(2+). Asp-31 contributes to the Zn(2+) binding site. Ca(2+)-binding residues include Thr-32, Glu-37, Asp-68, Asn-70, Asp-72, Gln-74, and Glu-79. Zn(2+) is bound by residues His-92 and His-96. His-107 bears the Pros-methylhistidine mark.

In terms of assembly, homodimer. Preferentially exists as a heterodimer or heterotetramer with S100A8 known as calprotectin (S100A8/A9). S100A9 interacts with ATP2A2. S100A9 interacts with AGER, and with the heterodimeric complex formed by TLR4 and LY96 in the presence of calcium and/or zinc ions. S100A9 binds quinoline-3-carboxamides in the presence of calcium and/or zinc ions. S100A9 interacts with amyloid-beta protein 40. Calprotectin (S100A8/9) interacts with CEACAM3 and tubulin filaments in a calcium-dependent manner. Heterotetrameric calprotectin (S100A8/A9) interacts with ANXA6 and associates with tubulin filaments in activated monocytes. Calprotectin (S100A8/9) interacts with NCF2/P67PHOX, RAC1, RAC2, CYBA and CYBB. Calprotectin (S100A8/9) interacts with NOS2 to form the iNOS-S100A8/A9 transnitrosylase complex; induced by LDL(ox). Calprotectin (S100A8/9) interacts with CD69. In terms of processing, phosphorylated. Phosphorylation inhibits activation of tubulin polymerization. Methylation at His-107 by METTL9 reduces zinc-binding without affecting heterodimerization with S100A8. In terms of tissue distribution, highly expressed at sites of inflammation.

It localises to the secreted. The protein resides in the cytoplasm. The protein localises to the cytoskeleton. It is found in the cell membrane. Functionally, S100A9 is a calcium- and zinc-binding protein which plays a prominent role in the regulation of inflammatory processes and immune response. It can induce neutrophil chemotaxis, adhesion, can increase the bactericidal activity of neutrophils by promoting phagocytosis via activation of SYK, PI3K/AKT, and ERK1/2 and can induce degranulation of neutrophils by a MAPK-dependent mechanism. Predominantly found as calprotectin (S100A8/A9) which has a wide plethora of intra- and extracellular functions. The intracellular functions include: facilitating leukocyte arachidonic acid trafficking and metabolism, modulation of the tubulin-dependent cytoskeleton during migration of phagocytes and activation of the neutrophilic NADPH-oxidase. Also participates in regulatory T-cell differentiation together with CD69. Activates NADPH-oxidase by facilitating the enzyme complex assembly at the cell membrane, transferring arachidonic acid, an essential cofactor, to the enzyme complex and S100A8 contributes to the enzyme assembly by directly binding to NCF2/P67PHOX. The extracellular functions involve pro-inflammatory, antimicrobial, oxidant-scavenging and apoptosis-inducing activities. Its pro-inflammatory activity includes recruitment of leukocytes, promotion of cytokine and chemokine production, and regulation of leukocyte adhesion and migration. Acts as an alarmin or a danger associated molecular pattern (DAMP) molecule and stimulates innate immune cells via binding to pattern recognition receptors such as Toll-like receptor 4 (TLR4) and receptor for advanced glycation endproducts (AGER). Binding to TLR4 and AGER activates the MAP-kinase and NF-kappa-B signaling pathways resulting in the amplification of the pro-inflammatory cascade. Has antimicrobial activity towards bacteria and fungi and exerts its antimicrobial activity probably via chelation of Zn(2+) which is essential for microbial growth. Can induce cell death via autophagy and apoptosis and this occurs through the cross-talk of mitochondria and lysosomes via reactive oxygen species (ROS) and the process involves BNIP3. Can regulate neutrophil number and apoptosis by an anti-apoptotic effect; regulates cell survival via ITGAM/ITGB and TLR4 and a signaling mechanism involving MEK-ERK. Its role as an oxidant scavenger has a protective role in preventing exaggerated tissue damage by scavenging oxidants. The iNOS-S100A8/A9 transnitrosylase complex is proposed to direct selective inflammatory stimulus-dependent S-nitrosylation of multiple targets such as GAPDH, NXA5, EZR, MSN and VIM by recognizing a [IL]-x-C-x-x-[DE] motif. This Rattus norvegicus (Rat) protein is Protein S100-A9 (S100a9).